Consider the following 88-residue polypeptide: MLCAIYKSKKKLGSYLYVANREDFSSVPSVLLEHFGKPELVMMFNLLGRKALYNVDCNEVLETIKRQGFYLQIAKQDDGLFNSLSEIK.

Residues 1–85 (MLCAIYKSKK…QDDGLFNSLS (85 aa)) form the YcgL domain.

The sequence is that of YcgL domain-containing protein CGSHiGG_01115 from Haemophilus influenzae (strain PittGG).